The primary structure comprises 437 residues: Zinc finger protein 491 (437 aa).

A C2H2-type 1; degenerate zinc finger spans residues 35 to 59; that stretch reads KSCESGTCGEIFMGYSSFNRNIRTD. The C2H2-type 2; degenerate zinc finger occupies 103–125; the sequence is FDCKECEKSFISPASIRRYMVTH. C2H2-type zinc fingers lie at residues 131 to 153, 159 to 181, 187 to 209, 215 to 237, 243 to 265, 271 to 293, 299 to 321, 327 to 349, 355 to 377, 383 to 405, and 411 to 433; these read YKCKFCGKALDCLSLYLTHERTH, YECKQCGKAFSWHSSVRIHERTH, YECKECGKSFNFSSSFRRHERTH, YKCKECGKAFNCPSSFHRHERTH, YECKLYGKALSRLISFRRHMRMH, HKCKICGKAFYSPSSFQRHERSH, YKCKQCGKAFTCSTSFQYHERTH, DGCKQCGKAFRSAKYIRIHGRTH, YECKQCGKAFHCVSSFHRHERTH, YECKHCGKAFTCSIYIRIHERIH, and YQCKECGKAFIRSSYCRKHERTH.

Belongs to the krueppel C2H2-type zinc-finger protein family.

It localises to the nucleus. Its function is as follows. May be involved in transcriptional regulation. The polypeptide is Zinc finger protein 491 (ZNF491) (Homo sapiens (Human)).